The primary structure comprises 860 residues: Nucleolar MIF4G domain-containing protein 1 (860 aa).

Disordered regions lie at residues 1–172, 191–211, and 226–339; these read MAAS…AARK, RCLGLNKRKKKDGSSSVPLSF, and GKNS…EKYI. The segment at 1 to 269 is necessary for nucleolar localization and for targeting PPP1CA to the nucleolus; that stretch reads MAASRSAGEA…EEEEEGDVEK (269 aa). A compositionally biased stretch (basic residues) spans 20–31; that stretch reads VRMKRRGGRGPR. Residue serine 57 is modified to Phosphoserine. Basic residues predominate over residues 77 to 99; it reads GGRKSRKELRKEKRHLRKARRLQ. Basic and acidic residues predominate over residues 115 to 131; sequence GAEEASGHRQDTEERAR. At serine 139 the chain carries Phosphoserine. Residues 142-151 are compositionally biased toward basic residues; the sequence is RKPRPSRVKA. Residues 152–169 are compositionally biased toward low complexity; it reads KATAATAKTRPSAAATAA. Acidic residues-rich tracts occupy residues 249–267 and 278–293; these read SDLESDSQDESEEEEEGDV and AQSEDDDEDTEEEQGE. Positions 307–310 match the Required for efficient binding to PPP1CA and for targeting PPP1CA to the nucleolus motif; sequence RVRF. Residues 312–325 are compositionally biased toward acidic residues; it reads EDEEKSENSSEDGD. 3 positions are modified to phosphoserine: serine 317, serine 320, and serine 321. In terms of domain architecture, MIF4G spans 362–559; the sequence is KKHVKGLLNR…ETMLALKNND (198 aa). The 117-residue stretch at 654 to 770 folds into the MI domain; the sequence is DIRRNIFCTI…SLSILKVVEF (117 aa).

It belongs to the CWC22 family. May interact with EIF4A1, EIF4A2 and EIF4A3. Interacts with PPP1CA and PPP1CC. As to expression, expressed in heart and skeletal muscle.

It is found in the nucleus. The protein localises to the nucleolus. Functionally, plays a role in targeting PPP1CA to the nucleolus. This chain is Nucleolar MIF4G domain-containing protein 1 (NOM1), found in Homo sapiens (Human).